We begin with the raw amino-acid sequence, 80 residues long: Large ribosomal subunit protein eL20 (80 aa).

Belongs to the eukaryotic ribosomal protein eL20 family. Part of the 50S ribosomal subunit. Binds 23S rRNA.

This is Large ribosomal subunit protein eL20 from Methanopyrus kandleri (strain AV19 / DSM 6324 / JCM 9639 / NBRC 100938).